The following is a 296-amino-acid chain: MDGDGDPESVGQPEEASPEEQPEEASAEEERPEDQQEEEAAAAAAYLDELPEPLLLRVLAALPAAELVQACRLVCLRWKELVDGAPLWLLKCQQEGLVPEGGVEEERDHWQQFYFLSKRRRNLLRNPCGEEDLEGWCDVEHGGDGWRVEELPGDSGVEFTHDESVKKYFASSFEWCRKAQVIDLQAEGYWEELLDTTQPAIVVKDWYSGRSDAGCLYELTVKLLSEHENVLAEFSSGQVAVPQDSDGGGWMEISHTFTDYGPGVRFVRFEHGGQDSVYWKGWFGARVTNSSVWVEP.

Residues 1–41 (MDGDGDPESVGQPEEASPEEQPEEASAEEERPEDQQEEEAA) are disordered. Residues 16-40 (ASPEEQPEEASAEEERPEDQQEEEA) show a composition bias toward acidic residues. In terms of domain architecture, F-box spans 44–91 (AAYLDELPEPLLLRVLAALPAAELVQACRLVCLRWKELVDGAPLWLLK). The 184-residue stretch at 113–296 (FYFLSKRRRN…VTNSSVWVEP (184 aa)) folds into the FBA domain. Residues 210-212 (RSD) and 278-279 (YW) each bind a carbohydrate.

In terms of assembly, component of the SCF(FBXO2) complex consisting of CUL1, RBX1, SKP1 and FBXO2. Predominantly detected as heterodimer with SKP1; the heterodimer with SKP1 is not part of the SCF(FBXO2) complex.

Its subcellular location is the cytoplasm. It localises to the microsome membrane. The protein operates within protein modification; protein ubiquitination. Functionally, substrate recognition component of a SCF (SKP1-CUL1-F-box protein) E3 ubiquitin-protein ligase complex that mediates the ubiquitination and subsequent proteasomal degradation of target proteins. Involved in the endoplasmic reticulum-associated degradation pathway (ERAD) for misfolded lumenal proteins by recognizing and binding sugar chains on unfolded glycoproteins that are retrotranslocated into the cytosol and promoting their ubiquitination and subsequent degradation. Prevents formation of cytosolic aggregates of unfolded glycoproteins that have been retrotranslocated into the cytosol. Able to recognize and bind denatured glycoproteins, preferentially those of the high-mannose type. In Homo sapiens (Human), this protein is F-box only protein 2 (FBXO2).